A 964-amino-acid chain; its full sequence is Chaperone protein ClpB4, mitochondrial (964 aa).

Residues 1-39 (MALRRLSKSVSSAIKAQYTLSRPSPLLRSRSLSSSPHYT) constitute a mitochondrion transit peptide. Residues 83–227 (VNQNEFTEMA…KDAIKDVRGD (145 aa)) form the Clp R domain. 2 repeat regions span residues 88–153 (FTEM…ISKQ) and 164–227 (LGSS…VRGD). Residues 242-490 (LEKYGNDLTE…KLKMEITSKP (249 aa)) are i. ATP-binding positions include 287–294 (GEPGVGKT) and 690–697 (GPTGVGKT). An II region spans residues 616-807 (VTDLDIAEIV…VVIMTSNIGS (192 aa)).

Belongs to the ClpA/ClpB family.

The protein resides in the mitochondrion. In terms of biological role, molecular chaperone that does not seem to be involved in heat stress response or tolerance. This is Chaperone protein ClpB4, mitochondrial (CLPB4) from Arabidopsis thaliana (Mouse-ear cress).